A 315-amino-acid chain; its full sequence is Cytoplasmic dynein intermediate light chain DYN3 (315 aa).

Belongs to the dynein light intermediate chain DYN3 family. The cytoplasmic dynein is composed of at least two heavy chains and a number of intermediate and light chains.

Its subcellular location is the cytoplasm. It is found in the cytoskeleton. Component of the cytoplasmic dynein which acts as a motor for the intracellular retrograde motility of vesicles and organelles along microtubules. May play an important role in the proper orientation of the mitotic spindle into the budding daughter cell yeast. Probably required for normal progression of the cell cycle. The protein is Cytoplasmic dynein intermediate light chain DYN3 (DYN3) of Candida glabrata (strain ATCC 2001 / BCRC 20586 / JCM 3761 / NBRC 0622 / NRRL Y-65 / CBS 138) (Yeast).